The primary structure comprises 1700 residues: Rho guanine nucleotide exchange factor 28 (1700 aa).

The tract at residues 288 to 343 is disordered; that stretch reads TEKATMPSGAAETEEEVRNLESGRSPSEEEEDAKSIKSQVDGPSEHEDQDRLPLDR. A phosphoserine mark is found at serine 312 and serine 314. The span at 330-343 shows a compositional bias: basic and acidic residues; the sequence is PSEHEDQDRLPLDR. Residue serine 478 is modified to Phosphoserine. The segment at 483 to 532 is disordered; sequence VADSEGEGGSEPPICYAVGSQSSPRTGLPSGDELDSFETNTEPDCNISRT. Position 623 is a phosphoserine (serine 623). The segment at 651 to 698 adopts a Phorbol-ester/DAG-type zinc-finger fold; it reads RHQFVPGTFSGVLQCSGCDKTLLGKESLQCANCKANTHKGCKDAVPPC. In terms of domain architecture, DH spans 846 to 1041; it reads KRQDVIFELM…KDMIAAVDLK (196 aa). The 90-residue stretch at 1095–1184 folds into the PH domain; the sequence is ATGRFKDILA…NWMRRIQQAV (90 aa). Disordered regions lie at residues 1184-1205 and 1289-1328; these read VESC…RRKA and KMGD…TEGT. Over residues 1191–1205 the composition is skewed to basic and acidic residues; the sequence is EGGRTSESDEERRKA. The interval 1292–1301 is interaction with PTK2/FAK1; required for regulation of axonal branching and synapse formation; that stretch reads DVSQSSEESP. Residues 1309 to 1325 show a composition bias toward polar residues; it reads TPSTQDVPASPTASLVT. The mediates cytoplasmic retention and interaction with YWHAH stretch occupies residues 1369–1380; the sequence is IIQAIQNLTRLL. Positions 1421-1522 form a coiled coil; it reads QEKSRYLEKQ…RERQKMRVQQ (102 aa). Residues 1421–1700 form an interaction with microtubules region; that stretch reads QEKSRYLEKQ…DGAEENILYL (280 aa). Residues 1493–1524 form an RNA-binding region; the sequence is QLQEYQQSLERLREGQRMVERERQKMRVQQGL. Phosphoserine is present on serine 1535. The tract at residues 1563–1576 is mediates cytoplasmic retention and interaction with MAPK8IP1; the sequence is FINEAFGHMSLNTS. The disordered stretch occupies residues 1602 to 1700; it reads SESPTELKID…DGAEENILYL (99 aa). Residue serine 1604 is modified to Phosphoserine. The segment covering 1647-1663 has biased composition (low complexity); it reads DLDSFQSESSSPQDSNQ. Polar residues predominate over residues 1664-1675; sequence RGPQPQTLTTEA.

As to quaternary structure, homooligomer; forms some cytoplasmic aggregates. Forms a complex with MAPK8 and MAPK8IP1. Interacts with RHOA. Interacts with microtubules. Interacts with YWHAE and YWHAH. Interacts with PTK2/FAK1. Interacts with NEFL. Interacts with CTNND2; prevents interaction with RHOA. In terms of processing, phosphorylated on tyrosine upon stimulation of cells by laminin. As to expression, highly enriched in the brain (at protein level). Also detected in lung and kidney.

It is found in the cytoplasm. The protein resides in the cell membrane. In terms of biological role, functions as a RHOA-specific guanine nucleotide exchange factor regulating signaling pathways downstream of integrins and growth factor receptors. Functions in axonal branching, synapse formation and dendritic morphogenesis. Also functions in focal adhesion formation, cell motility and B-lymphocytes activation. May regulate NEFL expression and aggregation and play a role in apoptosis. The polypeptide is Rho guanine nucleotide exchange factor 28 (Arhgef28) (Mus musculus (Mouse)).